The primary structure comprises 115 residues: MNLMLTLFINTSLASVLVLIAFWLPQLNIYTEKASPYECGFDPMGSARLPFTMKFFLVAITFLLFDLEIALLLPLPWASQTTNLKTMLTMALILISLLAASLAYEWTQKGLEWAE.

The next 3 helical transmembrane spans lie at 3–23, 55–75, and 86–106; these read LMLT…IAFW, FFLV…LLPL, and TMLT…AYEW.

It belongs to the complex I subunit 3 family. Core subunit of respiratory chain NADH dehydrogenase (Complex I) which is composed of 45 different subunits. Interacts with TMEM186. Interacts with TMEM242.

The protein localises to the mitochondrion inner membrane. It catalyses the reaction a ubiquinone + NADH + 5 H(+)(in) = a ubiquinol + NAD(+) + 4 H(+)(out). Core subunit of the mitochondrial membrane respiratory chain NADH dehydrogenase (Complex I) which catalyzes electron transfer from NADH through the respiratory chain, using ubiquinone as an electron acceptor. Essential for the catalytic activity of complex I. This chain is NADH-ubiquinone oxidoreductase chain 3, found in Ceratotherium simum (White rhinoceros).